The sequence spans 806 residues: MMFLEMQRAFMLHGRRAVTRSAVGVRYISEDIQQKDAQAGEKATATATGVIYKSDEETLMYFDNVYPRATSLWRPTQWYNILLSNQSREAVREKIMRLASPASNPVHGLELRSTIPIKRDGGVFATFRVPREYTRAQVNALIQANTQQESSKSLLAAFTRAAAFPVKGVPWIEDLKRLPNNVVRVEVEGPALSEEELYSLFRRYGTILDIYPAGKNGYATIRYRSFRGAICAKNCVSGIEINGSTLHVKFEPVVRAHAIRDFFVNHPRIAIPLLIALLSICAVLIFDPIREFSIEQKITRMYTLSRDNFVVKSILRLTSYTVSSVKHLWGYDDDQPEKRQLWQERVEKVNDLKMWLEENNNTFVVVTGPRGSGKHELVMQHTLHDRPNVLYLDCDTLIKSRTDSKFLRNAAHQIGYFPIFPWLNSVTTLVDLAVQGLTGQKSGLSESKETQFRNMLNTAMMSIRHIALSGYKATLHSGDDVTTVKEEDYLQQHPERKPVIVIDRFSNKAEINGFVYKELADWASMLVQMNIAHVIFLTESVSPNQLLAEALPNQVFKFLFLSDASKDSARSYVLSQLYPSSPAYSEKMPAADADANEEYRKEIDRALEPIGGRMLDLQAFVRRVKSGEEPSEALEKMVEQASEQITQIFLSERSEPIKTAQAWELIELLSQNDVVKYGDIVFRPLFKSSPEAGLLELEKNGLITISRNRGVLQDIRPAKPLFKAAFSYLLQDKDLSIVLRTGYYLRLIAFETGRIKKWEEELRLLAKVSDQRICKSRLNYLASKIDASSGVINSCEDKVKEMSKRI.

A mitochondrion-targeting transit peptide spans 1-25; that stretch reads MMFLEMQRAFMLHGRRAVTRSAVGV. The Mitochondrial matrix segment spans residues 26–268; it reads RYISEDIQQK…IRDFFVNHPR (243 aa). Residues 181–253 enclose the RRM domain; that stretch reads NVVRVEVEGP…STLHVKFEPV (73 aa). Residues 269 to 289 traverse the membrane as a helical segment; sequence IAIPLLIALLSICAVLIFDPI. The Mitochondrial intermembrane segment spans residues 290–806; sequence REFSIEQKIT…DKVKEMSKRI (517 aa).

This sequence belongs to the YME2 family.

It is found in the mitochondrion inner membrane. Functionally, plays a role in maintaining the mitochondrial genome and in controlling the mtDNA escape. Involved in the regulation of mtDNA nucleotide structure and number. May have a dispensable role in early maturation of pre-rRNA. The protein is Mitochondrial escape protein 2 (YME2) of Eremothecium gossypii (strain ATCC 10895 / CBS 109.51 / FGSC 9923 / NRRL Y-1056) (Yeast).